Consider the following 631-residue polypeptide: Translation factor GUF1, mitochondrial (631 aa).

The transit peptide at 1-19 directs the protein to the mitochondrion; that stretch reads MFNRRLLRHVRYAFQQVRS. Residues 33–214 form the tr-type G domain; it reads ERYRNFSIVA…AIVDRIPPPT (182 aa). Residues 42-49, 107-111, and 161-164 each bind GTP; these read AHVDHGKS, DTPGH, and NKID.

The protein belongs to the TRAFAC class translation factor GTPase superfamily. Classic translation factor GTPase family. LepA subfamily.

The protein localises to the mitochondrion inner membrane. The enzyme catalyses GTP + H2O = GDP + phosphate + H(+). Functionally, promotes mitochondrial protein synthesis. May act as a fidelity factor of the translation reaction, by catalyzing a one-codon backward translocation of tRNAs on improperly translocated ribosomes. Binds to mitochondrial ribosomes in a GTP-dependent manner. The protein is Translation factor GUF1, mitochondrial of Kluyveromyces lactis (strain ATCC 8585 / CBS 2359 / DSM 70799 / NBRC 1267 / NRRL Y-1140 / WM37) (Yeast).